The sequence spans 492 residues: Probable sphingolipid transporter spinster homolog 1 (492 aa).

A helical membrane pass occupies residues 29–49; the sequence is FVTILCIINLINYVDRGVIAS. N-linked (GlcNAc...) asparagine glycosylation is found at Asn53 and Asn76. The next 7 helical transmembrane spans lie at 83 to 103, 119 to 139, 141 to 161, 169 to 189, 200 to 220, 279 to 299, and 317 to 337; these read GLLS…FAGL, VWTI…IAVF, MFVG…IDDS, FWLG…YVFG, WAFY…FCIK, VFIV…AYSY, and IFGG…SYVL. Asn341 is a glycosylation site (N-linked (GlcNAc...) asparagine). 4 consecutive transmembrane segments (helical) span residues 348–368, 372–392, 407–427, and 442–462; these read FKLL…AFLM, YAFI…QAPV, LSMA…SSPL, and TLII…GIFM. Phosphoserine is present on Ser472. The span at 472 to 481 shows a compositional bias: acidic residues; the sequence is SEDDEVEEDK. Positions 472–492 are disordered; sequence SEDDEVEEDKLESKTENSTLA. A glycan (N-linked (GlcNAc...) asparagine) is linked at Asn488.

This sequence belongs to the major facilitator superfamily. Spinster (TC 2.A.1.49) family.

It is found in the late endosome membrane. The protein localises to the lysosome membrane. Probable sphingolipid transporter that plays a central role in endosomes and/or lysosomes storage. This Arabidopsis thaliana (Mouse-ear cress) protein is Probable sphingolipid transporter spinster homolog 1.